Here is a 265-residue protein sequence, read N- to C-terminus: tRNA(His) guanylyltransferase (265 aa).

Residues Asp29, Gly30, and Asp76 each contribute to the Mg(2+) site. Residues 29–34 (DGKGFH) and 75–76 (SD) each bind GTP.

This sequence belongs to the tRNA(His) guanylyltransferase family. Mg(2+) is required as a cofactor.

It carries out the reaction a 5'-end ribonucleotide-tRNA(His) + GTP + ATP + H2O = a 5'-end phospho-guanosine-ribonucleotide-tRNA(His) + AMP + 2 diphosphate + H(+). Functionally, adds a GMP to the 5'-end of tRNA(His) after transcription and RNase P cleavage. In Debaryomyces hansenii (strain ATCC 36239 / CBS 767 / BCRC 21394 / JCM 1990 / NBRC 0083 / IGC 2968) (Yeast), this protein is tRNA(His) guanylyltransferase (THG1).